Here is a 106-residue protein sequence, read N- to C-terminus: Large ribosomal subunit protein uL23 (106 aa).

Belongs to the universal ribosomal protein uL23 family. In terms of assembly, part of the 50S ribosomal subunit. Contacts protein L29, and trigger factor when it is bound to the ribosome.

In terms of biological role, one of the early assembly proteins it binds 23S rRNA. One of the proteins that surrounds the polypeptide exit tunnel on the outside of the ribosome. Forms the main docking site for trigger factor binding to the ribosome. In Acinetobacter baylyi (strain ATCC 33305 / BD413 / ADP1), this protein is Large ribosomal subunit protein uL23.